We begin with the raw amino-acid sequence, 130 residues long: Ion transport peptide (130 aa).

Disulfide bonds link Cys-62–Cys-98, Cys-78–Cys-94, and Cys-81–Cys-107. Residue Leu-127 is modified to Leucine amide.

The protein belongs to the arthropod CHH/MIH/GIH/VIH hormone family. In terms of tissue distribution, brain and corpus cardiacum.

The protein localises to the secreted. Stimulates salt and water reabsorption and inhibits acid secretion in the ileum of S.gregaria. The polypeptide is Ion transport peptide (Schistocerca gregaria (Desert locust)).